Here is a 200-residue protein sequence, read N- to C-terminus: Serine/arginine-rich splicing factor RSZ22 (200 aa).

In terms of domain architecture, RRM spans 2–71 (SRVYVGNLDP…NGWRVEQSHN (70 aa)). Over residues 62 to 83 (NGWRVEQSHNRGERGGGGRGGD) the composition is skewed to basic and acidic residues. Disordered stretches follow at residues 62-97 (NGWR…RGGS) and 112-200 (RECR…RSRS). Residues 84 to 96 (RGGGGGGRGGRGG) show a composition bias toward gly residues. The CCHC-type zinc-finger motif lies at 99 to 116 (LKCYECGETGHFARECRN). Over residues 120 to 137 (TGRRRSKSRSRTPPRYRR) the composition is skewed to basic residues. Ser138, Ser147, Ser152, Ser160, Ser162, Ser174, and Ser200 each carry phosphoserine. The segment covering 138–150 (SPSYGRRSYSPRA) has biased composition (low complexity). A compositionally biased stretch (pro residues) spans 151–166 (RSPPPPRRRSPSPPPA).

It belongs to the splicing factor SR family. RSZ subfamily. In terms of assembly, component of the spliceosome. Interacts with AFC2, RS2Z33 and RNU1. Extensively phosphorylated on serine residues in the RS domain. Phosphorylated by AFC2. In terms of tissue distribution, expressed in primary and lateral roots, stems, petioles, abaxial and adaxial epidermis cells, trichomes, unopened flowers, anther filaments, anthers, stigma, pollen, pollen tube, ovule funiculi, integuments, embryo sac and developing seeds.

Its subcellular location is the nucleus speckle. It localises to the nucleus. The protein localises to the nucleolus. It is found in the nucleoplasm. The protein resides in the cytoplasm. Functionally, sequence-specific RNA-binding protein probably involved in pre-mRNA splicing. In vitro, can complement efficiently splicing-deficient mammalian SRSF7-depleted HeLa cell extract. The polypeptide is Serine/arginine-rich splicing factor RSZ22 (RSZ22) (Arabidopsis thaliana (Mouse-ear cress)).